The following is a 454-amino-acid chain: Bifunctional protein GlmU (454 aa).

The segment at 1-227 is pyrophosphorylase; that stretch reads MTQLSVVILA…FMEVEGANNR (227 aa). UDP-N-acetyl-alpha-D-glucosamine is bound by residues 9–12, Lys23, Gln74, 79–80, 101–103, Gly138, Glu152, Asn167, and Asn225; these read LAAG, GT, and YGD. Asp103 is a Mg(2+) binding site. Residue Asn225 participates in Mg(2+) binding. Positions 228–248 are linker; it reads LQLAALERFYQKTQAEKLLLA. An N-acetyltransferase region spans residues 249-454; sequence GVRLIDPARF…QGWQRPTKKK (206 aa). UDP-N-acetyl-alpha-D-glucosamine is bound by residues Arg331 and Lys349. His361 functions as the Proton acceptor in the catalytic mechanism. The UDP-N-acetyl-alpha-D-glucosamine site is built by Tyr364 and Asn375. Residues Ala378, 384-385, Ser403, Ala421, and Arg438 each bind acetyl-CoA; that span reads NY.

The protein in the N-terminal section; belongs to the N-acetylglucosamine-1-phosphate uridyltransferase family. It in the C-terminal section; belongs to the transferase hexapeptide repeat family. As to quaternary structure, homotrimer. Mg(2+) is required as a cofactor.

Its subcellular location is the cytoplasm. It carries out the reaction alpha-D-glucosamine 1-phosphate + acetyl-CoA = N-acetyl-alpha-D-glucosamine 1-phosphate + CoA + H(+). It catalyses the reaction N-acetyl-alpha-D-glucosamine 1-phosphate + UTP + H(+) = UDP-N-acetyl-alpha-D-glucosamine + diphosphate. It participates in nucleotide-sugar biosynthesis; UDP-N-acetyl-alpha-D-glucosamine biosynthesis; N-acetyl-alpha-D-glucosamine 1-phosphate from alpha-D-glucosamine 6-phosphate (route II): step 2/2. The protein operates within nucleotide-sugar biosynthesis; UDP-N-acetyl-alpha-D-glucosamine biosynthesis; UDP-N-acetyl-alpha-D-glucosamine from N-acetyl-alpha-D-glucosamine 1-phosphate: step 1/1. It functions in the pathway bacterial outer membrane biogenesis; LPS lipid A biosynthesis. Functionally, catalyzes the last two sequential reactions in the de novo biosynthetic pathway for UDP-N-acetylglucosamine (UDP-GlcNAc). The C-terminal domain catalyzes the transfer of acetyl group from acetyl coenzyme A to glucosamine-1-phosphate (GlcN-1-P) to produce N-acetylglucosamine-1-phosphate (GlcNAc-1-P), which is converted into UDP-GlcNAc by the transfer of uridine 5-monophosphate (from uridine 5-triphosphate), a reaction catalyzed by the N-terminal domain. The chain is Bifunctional protein GlmU from Actinobacillus pleuropneumoniae serotype 3 (strain JL03).